We begin with the raw amino-acid sequence, 360 residues long: Phospho-N-acetylmuramoyl-pentapeptide-transferase (360 aa).

The next 10 membrane-spanning stretches (helical) occupy residues alanine 26–glutamate 46, methionine 74–glycine 94, tyrosine 97–tyrosine 117, tyrosine 134–asparagine 154, valine 168–serine 188, glycine 199–serine 219, serine 236–phenylalanine 256, valine 263–leucine 283, isoleucine 288–valine 308, and valine 338–lysine 358.

It belongs to the glycosyltransferase 4 family. MraY subfamily. It depends on Mg(2+) as a cofactor.

It is found in the cell inner membrane. The catalysed reaction is UDP-N-acetyl-alpha-D-muramoyl-L-alanyl-gamma-D-glutamyl-meso-2,6-diaminopimeloyl-D-alanyl-D-alanine + di-trans,octa-cis-undecaprenyl phosphate = di-trans,octa-cis-undecaprenyl diphospho-N-acetyl-alpha-D-muramoyl-L-alanyl-D-glutamyl-meso-2,6-diaminopimeloyl-D-alanyl-D-alanine + UMP. Its pathway is cell wall biogenesis; peptidoglycan biosynthesis. Catalyzes the initial step of the lipid cycle reactions in the biosynthesis of the cell wall peptidoglycan: transfers peptidoglycan precursor phospho-MurNAc-pentapeptide from UDP-MurNAc-pentapeptide onto the lipid carrier undecaprenyl phosphate, yielding undecaprenyl-pyrophosphoryl-MurNAc-pentapeptide, known as lipid I. In Shewanella oneidensis (strain ATCC 700550 / JCM 31522 / CIP 106686 / LMG 19005 / NCIMB 14063 / MR-1), this protein is Phospho-N-acetylmuramoyl-pentapeptide-transferase.